Consider the following 532-residue polypeptide: Ankyrin repeat-containing protein At2g01680 (532 aa).

ANK repeat units follow at residues 9 to 38 (LTHQ…GDEL), 58 to 89 (AGET…TVKI), 93 to 122 (SDMN…ELCR), 127 to 156 (SNTS…SCAM), 161 to 190 (NGKT…AIVG), 195 to 224 (KGQT…TILN), and 229 to 259 (KGNT…EVNA). Transmembrane regions (helical) follow at residues 354–374 (ITVV…NLPG), 396–416 (VFCL…VVQI), 436–456 (LMWA…FAVV), and 467–487 (ITLL…YFVF).

It is found in the membrane. The polypeptide is Ankyrin repeat-containing protein At2g01680 (Arabidopsis thaliana (Mouse-ear cress)).